The primary structure comprises 137 residues: TM2 domain-containing protein DDB_G0287015 (137 aa).

Residues Q9–F57 enclose the TM2 domain. The next 2 helical transmembrane spans lie at L12–V32 and V39–L59. Residues I106–P137 are disordered.

This sequence belongs to the TM2 family.

It is found in the membrane. The sequence is that of TM2 domain-containing protein DDB_G0287015 from Dictyostelium discoideum (Social amoeba).